The following is a 343-amino-acid chain: UDP-3-O-acylglucosamine N-acyltransferase 2 (343 aa).

His251 serves as the catalytic Proton acceptor.

It belongs to the transferase hexapeptide repeat family. LpxD subfamily. As to quaternary structure, homotrimer.

The catalysed reaction is a UDP-3-O-[(3R)-3-hydroxyacyl]-alpha-D-glucosamine + a (3R)-hydroxyacyl-[ACP] = a UDP-2-N,3-O-bis[(3R)-3-hydroxyacyl]-alpha-D-glucosamine + holo-[ACP] + H(+). It functions in the pathway bacterial outer membrane biogenesis; LPS lipid A biosynthesis. Its function is as follows. Catalyzes the N-acylation of UDP-3-O-acylglucosamine using 3-hydroxyacyl-ACP as the acyl donor. Is involved in the biosynthesis of lipid A, a phosphorylated glycolipid that anchors the lipopolysaccharide to the outer membrane of the cell. This Legionella pneumophila (strain Lens) protein is UDP-3-O-acylglucosamine N-acyltransferase 2.